The sequence spans 432 residues: Serine--tRNA ligase (432 aa).

235–237 (TSE) provides a ligand contact to L-serine. 266–268 (RSE) provides a ligand contact to ATP. Glu289 contributes to the L-serine binding site. An ATP-binding site is contributed by 353-356 (EISS). An L-serine-binding site is contributed by Ser388.

The protein belongs to the class-II aminoacyl-tRNA synthetase family. Type-1 seryl-tRNA synthetase subfamily. Homodimer. The tRNA molecule binds across the dimer.

The protein resides in the cytoplasm. The enzyme catalyses tRNA(Ser) + L-serine + ATP = L-seryl-tRNA(Ser) + AMP + diphosphate + H(+). It catalyses the reaction tRNA(Sec) + L-serine + ATP = L-seryl-tRNA(Sec) + AMP + diphosphate + H(+). Its pathway is aminoacyl-tRNA biosynthesis; selenocysteinyl-tRNA(Sec) biosynthesis; L-seryl-tRNA(Sec) from L-serine and tRNA(Sec): step 1/1. Its function is as follows. Catalyzes the attachment of serine to tRNA(Ser). Is also able to aminoacylate tRNA(Sec) with serine, to form the misacylated tRNA L-seryl-tRNA(Sec), which will be further converted into selenocysteinyl-tRNA(Sec). In Paraburkholderia phymatum (strain DSM 17167 / CIP 108236 / LMG 21445 / STM815) (Burkholderia phymatum), this protein is Serine--tRNA ligase.